The sequence spans 291 residues: Homeobox protein SIX2 (291 aa).

The homeobox DNA-binding region spans 124–183; it reads GEETSYCFKEKSRSVLREWYAHNPYPSPREKRELAEATGLTTTQVSNWFKNRRQRDRAAE. The interval 168–279 is disordered; it reads VSNWFKNRRQ…HHHGLQDSIL (112 aa). A compositionally biased stretch (basic and acidic residues) spans 179 to 190; that stretch reads DRAAEAKERENN. A compositionally biased stretch (low complexity) spans 224–233; the sequence is HSSSSPALLL. Positions 249 to 259 are enriched in pro residues; sequence PPGPSAVPVPV.

The protein belongs to the SIX/Sine oculis homeobox family. As to quaternary structure, interacts with TCF7L2; in a canonical Wnt signaling independent manner; prevents transcription of differentiation genes in cap mesenchyme. Interacts with OSR1; form a strong repressor complex with TCF7L2, TLE2 and TLE3 to prevent the activation of Wnt/beta-catenin target genes in the cap mesenchyme. Interacts with HOXA11, EYA1 and EYA3. Strongly expressed in skeletal muscle. Expressed in Wilms' tumor and in the cap mesenchyme of fetal kidney (at protein level).

Its subcellular location is the nucleus. In terms of biological role, transcription factor that plays an important role in the development of several organs, including kidney, skull and stomach. During kidney development, maintains cap mesenchyme multipotent nephron progenitor cells in an undifferentiated state by opposing the inductive signals emanating from the ureteric bud and cooperates with WNT9B to promote renewing progenitor cells proliferation. Acts through its interaction with TCF7L2 and OSR1 in a canonical Wnt signaling independent manner preventing transcription of differentiation genes in cap mesenchyme such as WNT4. Also acts independently of OSR1 to activate expression of many cap mesenchyme genes, including itself, GDNF and OSR1. During craniofacial development plays a role in growth and elongation of the cranial base through regulation of chondrocyte differentiation. During stomach organogenesis, controls pyloric sphincter formation and mucosal growth through regulation of a gene network including NKX2-5, BMPR1B, BMP4, SOX9 and GREM1. During branchial arch development, acts to mediate HOXA2 control over the insulin-like growth factor pathway. May also be involved in limb tendon and ligament development. Plays a role in cell proliferation and migration. The protein is Homeobox protein SIX2 (SIX2) of Homo sapiens (Human).